Reading from the N-terminus, the 256-residue chain is MKPLELDVFLCRTDNFGVLVHDPETGFTAAIDAPEEAPILEAATRRGWKITHIFTTHHHTDHVTANLALKEQFGCEIIGPINEAVAIPGLDRAMADGDSFLFGDHTVNVIETPGHTAGHICYHFVDDKLLFAADTLFALGCGRLFERPAADMWHSLQKLAVLPDETAVYFGHEYTLSNARFALTVDPDNERLKSRAAEIEALRADGKFTIPTTLGLEKETNPFLRAADPAIRRNLVMEGKTNEEVFAEIRKRKDHF.

Positions 57, 59, 61, 62, 115, 134, and 172 each coordinate Zn(2+).

This sequence belongs to the metallo-beta-lactamase superfamily. Glyoxalase II family. In terms of assembly, monomer. Requires Zn(2+) as cofactor.

It catalyses the reaction an S-(2-hydroxyacyl)glutathione + H2O = a 2-hydroxy carboxylate + glutathione + H(+). Its pathway is secondary metabolite metabolism; methylglyoxal degradation; (R)-lactate from methylglyoxal: step 2/2. In terms of biological role, thiolesterase that catalyzes the hydrolysis of S-D-lactoyl-glutathione to form glutathione and D-lactic acid. The chain is Hydroxyacylglutathione hydrolase from Rhizobium johnstonii (strain DSM 114642 / LMG 32736 / 3841) (Rhizobium leguminosarum bv. viciae).